We begin with the raw amino-acid sequence, 431 residues long: Trigger factor (431 aa).

Residues 158–243 enclose the PPIase FKBP-type domain; that stretch reads GDLVAVETWS…VAEVSEPVVP (86 aa).

This sequence belongs to the FKBP-type PPIase family. Tig subfamily.

It is found in the cytoplasm. The catalysed reaction is [protein]-peptidylproline (omega=180) = [protein]-peptidylproline (omega=0). Involved in protein export. Acts as a chaperone by maintaining the newly synthesized protein in an open conformation. Functions as a peptidyl-prolyl cis-trans isomerase. The protein is Trigger factor of Stenotrophomonas maltophilia (strain R551-3).